The following is a 452-amino-acid chain: tRNA-2-methylthio-N(6)-dimethylallyladenosine synthase (452 aa).

The 117-residue stretch at 5–121 (RRYHITTFGC…LADLLAQVEA (117 aa)) folds into the MTTase N-terminal domain. Positions 14, 50, 84, 156, 160, and 163 each coordinate [4Fe-4S] cluster. Residues 142 to 379 (RDSTITAWVN…NHLVAQMAAD (238 aa)) enclose the Radical SAM core domain. One can recognise a TRAM domain in the interval 382 to 446 (QRYLGRTEEV…AFSLTGQILS (65 aa)).

It belongs to the methylthiotransferase family. MiaB subfamily. Monomer. It depends on [4Fe-4S] cluster as a cofactor.

It is found in the cytoplasm. It catalyses the reaction N(6)-dimethylallyladenosine(37) in tRNA + (sulfur carrier)-SH + AH2 + 2 S-adenosyl-L-methionine = 2-methylsulfanyl-N(6)-dimethylallyladenosine(37) in tRNA + (sulfur carrier)-H + 5'-deoxyadenosine + L-methionine + A + S-adenosyl-L-homocysteine + 2 H(+). In terms of biological role, catalyzes the methylthiolation of N6-(dimethylallyl)adenosine (i(6)A), leading to the formation of 2-methylthio-N6-(dimethylallyl)adenosine (ms(2)i(6)A) at position 37 in tRNAs that read codons beginning with uridine. The protein is tRNA-2-methylthio-N(6)-dimethylallyladenosine synthase of Synechococcus elongatus (strain ATCC 33912 / PCC 7942 / FACHB-805) (Anacystis nidulans R2).